Here is a 355-residue protein sequence, read N- to C-terminus: Diacylglycerol O-acyltransferase 2A (355 aa).

Helical transmembrane passes span 41-61 and 62-78; these read LLWC…CSIP and VLLW…ILVW. A glycan (N-linked (GlcNAc...) asparagine) is linked at asparagine 142.

This sequence belongs to the diacylglycerol acyltransferase family.

The protein localises to the endoplasmic reticulum membrane. The enzyme catalyses an acyl-CoA + a 1,2-diacyl-sn-glycerol = a triacyl-sn-glycerol + CoA. The protein operates within glycerolipid metabolism; triacylglycerol biosynthesis. Catalyzes the terminal and only committed step in triacylglycerol synthesis by using diacylglycerol and fatty acyl CoA as substrates. Required for storage lipid synthesis. In Umbelopsis ramanniana (Oleaginous fungus), this protein is Diacylglycerol O-acyltransferase 2A (DGAT2A).